An 814-amino-acid chain; its full sequence is Rho GTPase-activating protein 26 (814 aa).

Positions 7–262 (EFSDCCLDSP…MKENPLEHKT (256 aa)) constitute a BAR domain. The 105-residue stretch at 265–369 (PYTMEGYLYV…WMEAMDGREP (105 aa)) folds into the PH domain. The 186-residue stretch at 383–568 (AQLDSIGFSI…ILIENHEKIF (186 aa)) folds into the Rho-GAP domain. Disordered regions lie at residues 584 to 618 (SRKKSSDSKPPSCSKRPLTLFHAVPSTEKQEQRNS) and 638 to 696 (SSSL…SSDS). Low complexity-rich tracts occupy residues 591–600 (SKPPSCSKRP) and 638–661 (SSSLQPNLNSSDSNLDVVKPSRPS). Positions 662-672 (SLPPNPSPTSP) are enriched in pro residues. Phosphoserine is present on Ser668. The residue at position 670 (Thr670) is a Phosphothreonine. Residue Ser671 is modified to Phosphoserine. Residues 673–696 (LSPSWPMFSAPSSPMPTSSTSSDS) show a composition bias toward low complexity. In terms of domain architecture, SH3 spans 756–814 (TPFRKAKALYACQAEHDSELSFTAGTVFDNVHPSQEPGWLEGTLNGKTGLIPENYVEFL).

In terms of assembly, interacts with NYAP1, NYAP2 and MYO16. Interacts with MICAL1 and WDR44. Binds to the C-terminus of PTK2/FAK1. In terms of processing, phosphorylated in a PINK1-dependent fashion promoting retrograde mitochondrial trafficking and clustering.

Its subcellular location is the cell junction. The protein localises to the focal adhesion. The protein resides in the cytoplasm. It localises to the cytoskeleton. It is found in the endosome membrane. GTPase-activating protein for RHOA and CDC42. Facilitates mitochondrial quality control by promoting Parkin-mediated recruitment of autophagosomes to damaged mitochondria. Associates with MICAL1 on the endosomal membrane to promote Rab8-Rab10-dependent tubule extension. After dissociation of MICAL1, recruits WDR44 which connects the endoplasmic reticulum (ER) with the endosomal tubule, thereby participating in the export of a subset of neosynthesized proteins. The polypeptide is Rho GTPase-activating protein 26 (Arhgap26) (Mus musculus (Mouse)).